The sequence spans 352 residues: Protein Wnt-2 (352 aa).

The N-terminal stretch at 1 to 23 (MWKIHNKLLIYILWIMEIRLVSS) is a signal peptide. Disulfide bonds link C65-C76, C115-C123, C125-C148, C196-C210, C198-C205, C281-C312, C297-C307, C311-C351, C327-C342, C329-C339, and C334-C335. 2 N-linked (GlcNAc...) asparagine glycosylation sites follow: N75 and N119. S202 is lipidated: O-palmitoleoyl serine; by PORCN.

This sequence belongs to the Wnt family. Post-translationally, palmitoleoylated by porcupine. The lipid group functions as a sorting signal, targeting the ligand to polarized vesicles that transport Wnt2 to unique sites at the cell surface. Depalmitoleoylated by notum, leading to inhibit Wnt signaling pathway. As to expression, dynamic expression pattern during embryogenesis. Expression is predominantly segmented, with expression also seen in the limb primordia and presumptive gonads. In embryonic tracheal cells, expression is close to and dorsal to the tracheal placode.

Its subcellular location is the secreted. It localises to the extracellular space. The protein resides in the extracellular matrix. In terms of biological role, binds as a ligand to a family of frizzled seven-transmembrane receptors and acts through a cascade of genes on the nucleus. Segment polarity protein. May function in gonadogenesis and limb development. Wg and Wnt2 have a role in the developing trachea and together are responsible for all dorsal trunk formation. The polypeptide is Protein Wnt-2 (Wnt2) (Drosophila melanogaster (Fruit fly)).